The following is a 355-amino-acid chain: MHC class I-like protein MILL2 (355 aa).

Residues 1 to 29 form the signal peptide; the sequence is MKASSGKPREFRPAVLLLILGLLLRDSRG. Residues 46–137 form an alpha-1 region; the sequence is RLTRTHTLRY…VINQKSQEEG (92 aa). 3 disulfides stabilise this stretch: Cys96/Cys107, Cys147/Cys210, and Cys249/Cys306. Residues Asn104 and Asn152 are each glycosylated (N-linked (GlcNAc...) asparagine). The tract at residues 138-229 is alpha-2; the sequence is LHTLQATLGC…SLRNGLQDTG (92 aa). The tract at residues 230-323 is alpha-3; that stretch reads PPMVTVTCRN…SIMQTAVSGH (94 aa). In terms of domain architecture, Ig-like C1-type spans 231 to 321; the sequence is PMVTVTCRNY…NHSIMQTAVS (91 aa). An N-linked (GlcNAc...) asparagine glycan is attached at Asn312. Residues 324 to 329 are connecting peptide; the sequence is AAEDSQ. Residue Asp330 is the site of GPI-anchor amidated aspartate attachment. A propeptide spans 331–355 (removed in mature form); the sequence is VASSATASAGSALPVVLAVALARAN.

It belongs to the MHC class I family. Heterodimer with B2M (beta-2-microglobulin). In terms of processing, N-glycosylated. In terms of tissue distribution, ubiquitously expressed in neonatal and adult tissues.

Its subcellular location is the cell membrane. Binds to heparan sulfate proteoglycans on the surface of fibroblast (NIH-3T3) cells. This Mus musculus (Mouse) protein is MHC class I-like protein MILL2.